Reading from the N-terminus, the 694-residue chain is Elongation factor G (694 aa).

The tr-type G domain maps to 9–288; that stretch reads SKIRNIGIMA…VIVKWLPSPK (280 aa). GTP contacts are provided by residues 18 to 25, 82 to 86, and 136 to 139; these read AHIDAGKT, DTPGH, and NKMD.

This sequence belongs to the TRAFAC class translation factor GTPase superfamily. Classic translation factor GTPase family. EF-G/EF-2 subfamily.

Its subcellular location is the cytoplasm. In terms of biological role, catalyzes the GTP-dependent ribosomal translocation step during translation elongation. During this step, the ribosome changes from the pre-translocational (PRE) to the post-translocational (POST) state as the newly formed A-site-bound peptidyl-tRNA and P-site-bound deacylated tRNA move to the P and E sites, respectively. Catalyzes the coordinated movement of the two tRNA molecules, the mRNA and conformational changes in the ribosome. The sequence is that of Elongation factor G from Chlamydia felis (strain Fe/C-56) (Chlamydophila felis).